A 264-amino-acid polypeptide reads, in one-letter code: Thiazole synthase (264 aa).

Lys-106 acts as the Schiff-base intermediate with DXP in catalysis. Residues Gly-167, 193 to 194, and 215 to 216 each bind 1-deoxy-D-xylulose 5-phosphate; these read AG and NS.

The protein belongs to the ThiG family. In terms of assembly, homotetramer. Forms heterodimers with either ThiH or ThiS.

It is found in the cytoplasm. It catalyses the reaction [ThiS sulfur-carrier protein]-C-terminal-Gly-aminoethanethioate + 2-iminoacetate + 1-deoxy-D-xylulose 5-phosphate = [ThiS sulfur-carrier protein]-C-terminal Gly-Gly + 2-[(2R,5Z)-2-carboxy-4-methylthiazol-5(2H)-ylidene]ethyl phosphate + 2 H2O + H(+). It functions in the pathway cofactor biosynthesis; thiamine diphosphate biosynthesis. Functionally, catalyzes the rearrangement of 1-deoxy-D-xylulose 5-phosphate (DXP) to produce the thiazole phosphate moiety of thiamine. Sulfur is provided by the thiocarboxylate moiety of the carrier protein ThiS. In vitro, sulfur can be provided by H(2)S. This chain is Thiazole synthase, found in Prochlorococcus marinus (strain MIT 9301).